The chain runs to 95 residues: Small ribosomal subunit protein bS6 (95 aa).

It belongs to the bacterial ribosomal protein bS6 family.

In terms of biological role, binds together with bS18 to 16S ribosomal RNA. The polypeptide is Small ribosomal subunit protein bS6 (Clostridium beijerinckii (strain ATCC 51743 / NCIMB 8052) (Clostridium acetobutylicum)).